The following is a 646-amino-acid chain: 1-deoxy-D-xylulose-5-phosphate synthase (646 aa).

Thiamine diphosphate-binding positions include histidine 86 and 127 to 129 (AHS). Aspartate 158 contacts Mg(2+). Thiamine diphosphate is bound by residues 159–160 (GA), asparagine 188, tyrosine 295, and glutamate 377. Asparagine 188 is a binding site for Mg(2+).

It belongs to the transketolase family. DXPS subfamily. Homodimer. Mg(2+) serves as cofactor. It depends on thiamine diphosphate as a cofactor.

It catalyses the reaction D-glyceraldehyde 3-phosphate + pyruvate + H(+) = 1-deoxy-D-xylulose 5-phosphate + CO2. Its pathway is metabolic intermediate biosynthesis; 1-deoxy-D-xylulose 5-phosphate biosynthesis; 1-deoxy-D-xylulose 5-phosphate from D-glyceraldehyde 3-phosphate and pyruvate: step 1/1. Catalyzes the acyloin condensation reaction between C atoms 2 and 3 of pyruvate and glyceraldehyde 3-phosphate to yield 1-deoxy-D-xylulose-5-phosphate (DXP). The polypeptide is 1-deoxy-D-xylulose-5-phosphate synthase (Burkholderia ambifaria (strain ATCC BAA-244 / DSM 16087 / CCUG 44356 / LMG 19182 / AMMD) (Burkholderia cepacia (strain AMMD))).